The primary structure comprises 459 residues: Cysteine--tRNA ligase (459 aa).

Residue Cys-28 participates in Zn(2+) binding. Positions 30–40 (VTIYDLCHIGH) match the 'HIGH' region motif. Zn(2+)-binding residues include Cys-209, His-234, and Glu-238. The 'KMSKS' region motif lies at 266–270 (KMSKS). Position 269 (Lys-269) interacts with ATP.

This sequence belongs to the class-I aminoacyl-tRNA synthetase family. As to quaternary structure, monomer. The cofactor is Zn(2+).

It localises to the cytoplasm. It carries out the reaction tRNA(Cys) + L-cysteine + ATP = L-cysteinyl-tRNA(Cys) + AMP + diphosphate. The polypeptide is Cysteine--tRNA ligase (Shewanella baltica (strain OS195)).